Reading from the N-terminus, the 440-residue chain is Glycerol-3-phosphate dehydrogenase [NAD(+)] 2, mitochondrial (440 aa).

The N-terminal 16 residues, 1–16 (MLAVRRLTRYTFLKRT), are a transit peptide targeting the mitochondrion. Phosphoserine occurs at positions 70, 72, and 75. Residues 90 to 95 (GSGNWG), F122, and F178 contribute to the NAD(+) site. Substrate is bound at residue K201. A234 contacts NAD(+). K294 (proton acceptor) is an active-site residue. R359 and Q388 together coordinate NAD(+). 359-360 (RN) provides a ligand contact to substrate.

It belongs to the NAD-dependent glycerol-3-phosphate dehydrogenase family.

It localises to the cytoplasm. Its subcellular location is the mitochondrion. It carries out the reaction sn-glycerol 3-phosphate + NAD(+) = dihydroxyacetone phosphate + NADH + H(+). Its function is as follows. Catalyzes the production of glycerol under anaerobic growth conditions. Glycerol production serves as a redox sink by consuming the excess cytosolic NADH during anaerobic metabolism. In Saccharomyces cerevisiae (strain ATCC 204508 / S288c) (Baker's yeast), this protein is Glycerol-3-phosphate dehydrogenase [NAD(+)] 2, mitochondrial.